We begin with the raw amino-acid sequence, 445 residues long: Argininosuccinate synthase (445 aa).

ATP-binding positions include 17–25 and alanine 43; that span reads AFSGGLDTS. Position 99 (tyrosine 99) interacts with L-citrulline. Residues glycine 129 and threonine 131 each coordinate ATP. Positions 131, 135, and 136 each coordinate L-aspartate. An L-citrulline-binding site is contributed by asparagine 135. Aspartate 136 provides a ligand contact to ATP. The L-citrulline site is built by arginine 139 and serine 192. Aspartate 194 is an ATP binding site. Positions 201, 203, and 280 each coordinate L-citrulline.

The protein belongs to the argininosuccinate synthase family. Type 2 subfamily. As to quaternary structure, homotetramer.

It is found in the cytoplasm. It carries out the reaction L-citrulline + L-aspartate + ATP = 2-(N(omega)-L-arginino)succinate + AMP + diphosphate + H(+). Its pathway is amino-acid biosynthesis; L-arginine biosynthesis; L-arginine from L-ornithine and carbamoyl phosphate: step 2/3. This is Argininosuccinate synthase from Burkholderia ambifaria (strain MC40-6).